A 157-amino-acid chain; its full sequence is Large ribosomal subunit protein uL15 (157 aa).

This sequence belongs to the universal ribosomal protein uL15 family. As to quaternary structure, part of the 50S ribosomal subunit.

Functionally, binds to the 23S rRNA. The sequence is that of Large ribosomal subunit protein uL15 from Ehrlichia ruminantium (strain Gardel).